Here is a 499-residue protein sequence, read N- to C-terminus: Thioredoxin reductase 1, cytoplasmic (499 aa).

FAD-binding positions include 18–23 (IGGGSG), 42–43 (DF), 58–59 (TC), and 63–67 (GCIPK). A disulfide bridge links Cys-59 with Cys-64. Lys-68 carries the N6-succinyllysine modification. A Phosphotyrosine modification is found at Tyr-131. Residues 131 to 132 (YG) and Thr-161 contribute to the FAD site. NADP(+) contacts are provided by residues Arg-166, 198-204 (ASYVALE), 221-222 (RS), Arg-226, 226-228 (RGF), 291-293 (VGR), and Lys-315. Tyr-200 serves as a coordination point for FAD. FAD contacts are provided by residues Asp-334, 341–343 (ELT), and His-472. Glu-341 is an NADP(+) binding site. His-472 (proton acceptor) is an active-site residue. The cysteinyl-selenocysteine (Cys-Sec) cross-link spans 497 to 498 (CU). A non-standard amino acid (selenocysteine) is located at residue Sec-498.

Belongs to the class-I pyridine nucleotide-disulfide oxidoreductase family. As to quaternary structure, homodimer. FAD serves as cofactor. ISGylated.

Its subcellular location is the cytoplasm. The catalysed reaction is [thioredoxin]-dithiol + NADP(+) = [thioredoxin]-disulfide + NADPH + H(+). It catalyses the reaction H2O2 + NADPH + H(+) = NADP(+) + 2 H2O. Reduces disulfideprotein thioredoxin (Trx) to its dithiol-containing form. Homodimeric flavoprotein involved in the regulation of cellular redox reactions, growth and differentiation. Contains a selenocysteine residue at the C-terminal active site that is essential for catalysis. Also has reductase activity on hydrogen peroxide (H2O2). In Rattus norvegicus (Rat), this protein is Thioredoxin reductase 1, cytoplasmic.